Consider the following 105-residue polypeptide: Large ribosomal subunit protein uL24 (105 aa).

This sequence belongs to the universal ribosomal protein uL24 family. In terms of assembly, part of the 50S ribosomal subunit.

One of two assembly initiator proteins, it binds directly to the 5'-end of the 23S rRNA, where it nucleates assembly of the 50S subunit. Its function is as follows. One of the proteins that surrounds the polypeptide exit tunnel on the outside of the subunit. The chain is Large ribosomal subunit protein uL24 from Halorhodospira halophila (strain DSM 244 / SL1) (Ectothiorhodospira halophila (strain DSM 244 / SL1)).